The following is a 442-amino-acid chain: Syndecan-3 (442 aa).

Disordered regions lie at residues 1–25 and 47–80; these read MKPGPPRRGTAQGQRVDTATHAPGA and RWRNENFERPVDLEGSGDDDSFPDDELDDLYSGS. Residues 1–44 form the signal peptide; it reads MKPGPPRRGTAQGQRVDTATHAPGARGLLLPPLLLLLLAGRAAG. Topologically, residues 45–387 are extracellular; the sequence is AQRWRNENFE…SILERKEVLV (343 aa). Residues 48 to 58 show a composition bias toward basic and acidic residues; that stretch reads WRNENFERPVD. A compositionally biased stretch (acidic residues) spans 61–75; it reads GSGDDDSFPDDELDD. O-linked (Xyl...) (glycosaminoglycan) serine glycosylation is found at S78, S80, S82, and S89. Residue T107 is glycosylated (O-linked (GalNAc) threonine; by GALNT13). 3 disordered regions span residues 152 to 199, 253 to 293, and 305 to 327; these read ESSQ…PATA, ATSR…AQTP, and EPEVPVSGGPSGDFELQEETTQP. Low complexity-rich tracts occupy residues 157–199 and 276–287; these read ATTI…PATA and TLPLGTTAPGPT. An O-linked (GalNAc) serine; by GALNT13 glycan is attached at S161. T162, T163, T170, and T172 each carry an O-linked (GalNAc) threonine; by GALNT13 glycan. Residues S315 and S367 are each glycosylated (O-linked (Xyl...) (glycosaminoglycan) serine). The chain crosses the membrane as a helical span at residues 388–408; that stretch reads AVIVGGVVGALFAAFLVTLLI. Residues Y409, Y419, Y431, and Y441 each carry the phosphotyrosine modification. The Cytoplasmic portion of the chain corresponds to 409–442; that stretch reads YRMKKKDEGSYTLEEPKQASVTYQKPDKQEEFYA. The segment at 419 to 442 is disordered; sequence YTLEEPKQASVTYQKPDKQEEFYA. The span at 433 to 442 shows a compositional bias: basic and acidic residues; that stretch reads KPDKQEEFYA.

This sequence belongs to the syndecan proteoglycan family. Interacts with TIAM1. Interacts with PTN (via heparan sulfate chains); this interaction mediates the neurite outgrowth-promoting signal from PTN to the cytoskeleton of growing neurites; this interaction mediates osteoblast recruitment. Interacts with MDK; this interaction induces SDC3 clustering; this interaction induces neuronal cell adhesion and neurite outgrowth. O-glycosylated within the Thr/Ser-rich region which could interact with lectin domains on other molecules.

The protein localises to the cell membrane. In terms of biological role, cell surface proteoglycan that may bear heparan sulfate. May have a role in the organization of cell shape by affecting the actin cytoskeleton, possibly by transferring signals from the cell surface in a sugar-dependent mechanism. In Mus musculus (Mouse), this protein is Syndecan-3 (Sdc3).